We begin with the raw amino-acid sequence, 208 residues long: MEIAVLDIKGKETGRKAKLSDSVFAIEPNDHAVYLDVKQYLANQRQGTHKAKERAEIKGSTRKIKKQKGTGTARAGSIKSPIFKGGGRVFGPRPRNYGFKLNKNLKRLARKSALSIKANDKAIMVIEDFSFDTPKTKNFTEVLKALGIESKKSLIVLGDSNKNVYLSSRNLKTSEVISSSELSTYKILNAKSIVFLEGSLEGIESKLS.

The tract at residues 45–77 (RQGTHKAKERAEIKGSTRKIKKQKGTGTARAGS) is disordered.

Belongs to the universal ribosomal protein uL4 family. As to quaternary structure, part of the 50S ribosomal subunit.

One of the primary rRNA binding proteins, this protein initially binds near the 5'-end of the 23S rRNA. It is important during the early stages of 50S assembly. It makes multiple contacts with different domains of the 23S rRNA in the assembled 50S subunit and ribosome. Its function is as follows. Forms part of the polypeptide exit tunnel. The chain is Large ribosomal subunit protein uL4 from Christiangramia forsetii (strain DSM 17595 / CGMCC 1.15422 / KT0803) (Gramella forsetii).